Reading from the N-terminus, the 175-residue chain is Peptide deformylase (175 aa).

Residues cysteine 96 and histidine 138 each contribute to the Fe cation site. Residue glutamate 139 is part of the active site. Fe cation is bound at residue histidine 142.

The protein belongs to the polypeptide deformylase family. Fe(2+) is required as a cofactor.

It carries out the reaction N-terminal N-formyl-L-methionyl-[peptide] + H2O = N-terminal L-methionyl-[peptide] + formate. Its function is as follows. Removes the formyl group from the N-terminal Met of newly synthesized proteins. Requires at least a dipeptide for an efficient rate of reaction. N-terminal L-methionine is a prerequisite for activity but the enzyme has broad specificity at other positions. The sequence is that of Peptide deformylase from Rhodopseudomonas palustris (strain ATCC BAA-98 / CGA009).